Reading from the N-terminus, the 230-residue chain is Ubiquitin carboxyl-terminal hydrolase isozyme L3 (230 aa).

The UCH catalytic domain occupies 5-229 (RWLPLEANPE…LRFNAIALSA (225 aa)). Positions 8–13 (PLEANP) are interaction with ubiquitin. Residue Cys-95 is the Nucleophile of the active site. Position 130 is a phosphoserine (Ser-130). The segment at 152-159 (AHEGQTEA) is interaction with ubiquitin. Crossover loop which restricts access of large ubiquitin adducts to the active site. The active-site Proton donor is the His-169. Positions 219–224 (ELRFNA) are interaction with ubiquitin.

This sequence belongs to the peptidase C12 family. In terms of assembly, preferentially binds diubiquitin; the interaction does not hydrolyze diubiquitin but, in vitro, inhibits the hydrolyzing activity on other substrates.

It is found in the cytoplasm. The enzyme catalyses Thiol-dependent hydrolysis of ester, thioester, amide, peptide and isopeptide bonds formed by the C-terminal Gly of ubiquitin (a 76-residue protein attached to proteins as an intracellular targeting signal).. Its activity is regulated as follows. Inhibited by monoubiquitin and diubiquitin. In terms of biological role, deubiquitinating enzyme (DUB) that controls levels of cellular ubiquitin through processing of ubiquitin precursors and ubiquitinated proteins. Thiol protease that recognizes and hydrolyzes a peptide bond at the C-terminal glycine of either ubiquitin or NEDD8. Has a 10-fold preference for Arg and Lys at position P3''. Deubiquitinates ENAC in apical compartments, thereby regulating apical membrane recycling. Indirectly increases the phosphorylation of IGFIR, AKT and FOXO1 and promotes insulin-signaling and insulin-induced adipogenesis. Required for stress-response retinal, skeletal muscle and germ cell maintenance. May be involved in working memory. Can hydrolyze UBB(+1), a mutated form of ubiquitin which is not effectively degraded by the proteasome. The polypeptide is Ubiquitin carboxyl-terminal hydrolase isozyme L3 (UCHL3) (Bos taurus (Bovine)).